Here is a 39-residue protein sequence, read N- to C-terminus: Large ribosomal subunit protein bL36 (39 aa).

Belongs to the bacterial ribosomal protein bL36 family.

The protein is Large ribosomal subunit protein bL36 of Oenococcus oeni (strain ATCC BAA-331 / PSU-1).